Here is a 71-residue protein sequence, read N- to C-terminus: Putative membrane protein insertion efficiency factor (71 aa).

The protein belongs to the UPF0161 family.

It is found in the cell membrane. Could be involved in insertion of integral membrane proteins into the membrane. In Ruminiclostridium cellulolyticum (strain ATCC 35319 / DSM 5812 / JCM 6584 / H10) (Clostridium cellulolyticum), this protein is Putative membrane protein insertion efficiency factor.